Consider the following 94-residue polypeptide: Protein RnfH (94 aa).

This sequence belongs to the UPF0125 (RnfH) family.

The protein is Protein RnfH of Sodalis glossinidius (strain morsitans).